A 446-amino-acid polypeptide reads, in one-letter code: MPLTGLEIYKQLPKKNCGECGTPTCLAFAMNLASGKASLDSCPYVSDAAREALDAAAAPPIAKVVLGAGPTAVEMGDETELFRHDKRFYHETAIAIQVSDNLSSEELKAKVEAINGLNFDRVGQHYTIQAIAIRHDADDPAAFKAAVASVAAATQLNLVLMADDPDVLKEALAGVADRKPLLYAATGANYEAMTALAKENNCPLAVYGNGLEELAELVDKIVALGHKQLVLDPGARETSRAIADFTQIRRLAIKKRFRSFGYPIIALTTAANPLDEVLQAVNYVTKYASLVVLRTDAKEHLLPLLSWRQNLYTDPQVPIRVEEKLNEIGAVNENSPVYVTTNFSLTYYSVEGEIESTKIPSYLLSVDTDGLSVLTAYADGKFEAEKIAAVMKKVDLDNKVKRHRIIIPGAVAVLKGKLEDLTGWEVIVGPREASGIVAFARANLAS.

The 58-residue stretch at 2–59 folds into the 4Fe-4S domain; that stretch reads PLTGLEIYKQLPKKNCGECGTPTCLAFAMNLASGKASLDSCPYVSDAAREALDAAAAP. [4Fe-4S] cluster is bound by residues Cys17, Cys20, Cys25, and Cys42. 5-methoxybenzimidazolylcob(I)amide contacts are provided by residues Thr340, Thr346, 370–373, and Ala433; that span reads GLSV.

In terms of assembly, heterohexamer composed of 2 subunits of AcsC, 2 subunits of AcsD and 2 subunits of AcsE. Requires [4Fe-4S] cluster as cofactor.

Its function is as follows. Acts as a methyl group carrier in the anaerobic acetyl-CoA pathway (Wood-Ljungdahl pathway) of carbon monoxide and carbon dioxide fixation. Binds the corrinoid 5-methoxybenzimidazolylcobamide which is then methylated by the AcsE subunit. This is Corrinoid/iron-sulfur protein large subunit (acsC) from Moorella thermoacetica (Clostridium thermoaceticum).